A 588-amino-acid polypeptide reads, in one-letter code: Actin-histidine N-methyltransferase (588 aa).

Positions 1–25 are disordered; it reads MGKKSRVKTQKSGTGATASVSPKET. The span at 10 to 25 shows a compositional bias: polar residues; it reads QKSGTGATASVSPKET. S-adenosyl-L-methionine is bound by residues R75, 104–106, R254, 275–279, and 325–327; these read EGF, DMCNH, and SGF. The SET domain occupies 94–314; that stretch reads EGFEMVNFKE…AGEQIYIFYG (221 aa). Residues 546-588 are disordered; that stretch reads VNGENSIPNGTRSGKENFNQEGSERATEGTKESSSDSTAGARE. The span at 548 to 566 shows a compositional bias: polar residues; sequence GENSIPNGTRSGKENFNQE. Positions 567-579 are enriched in basic and acidic residues; that stretch reads GSERATEGTKESS.

The protein belongs to the class V-like SAM-binding methyltransferase superfamily. SETD3 actin-histidine methyltransferase family. As to quaternary structure, interacts with MYOD1. Post-translationally, phosphorylated by GSK3B, which is required for recognition by the SCF(FBXW7) complex and subsequent degradation. Ubiquitinated by the SCF(FBXW7) complex following phosphorylation by GSK3B, leading to its degradation by the proteasome.

Its subcellular location is the cytoplasm. The protein resides in the nucleus. The catalysed reaction is L-histidyl-[protein] + S-adenosyl-L-methionine = N(tele)-methyl-L-histidyl-[protein] + S-adenosyl-L-homocysteine + H(+). Functionally, protein-histidine N-methyltransferase that specifically mediates 3-methylhistidine (tele-methylhistidine) methylation of actin at 'His-73'. Histidine methylation of actin is required for smooth muscle contraction of the laboring uterus during delivery. Does not have protein-lysine N-methyltransferase activity and probably only catalyzes histidine methylation of actin. The polypeptide is Actin-histidine N-methyltransferase (Canis lupus familiaris (Dog)).